Consider the following 215-residue polypeptide: Urease accessory protein UreF (215 aa).

This sequence belongs to the UreF family. UreD, UreF and UreG form a complex that acts as a GTP-hydrolysis-dependent molecular chaperone, activating the urease apoprotein by helping to assemble the nickel containing metallocenter of UreC. The UreE protein probably delivers the nickel.

The protein localises to the cytoplasm. Required for maturation of urease via the functional incorporation of the urease nickel metallocenter. The polypeptide is Urease accessory protein UreF (Paracoccus denitrificans (strain Pd 1222)).